The sequence spans 161 residues: Large ribosomal subunit protein bL9 (161 aa).

It belongs to the bacterial ribosomal protein bL9 family.

Its function is as follows. Binds to the 23S rRNA. This Blochmanniella floridana protein is Large ribosomal subunit protein bL9.